Reading from the N-terminus, the 170-residue chain is Ribosome maturation factor RimM (170 aa).

Residues 98 to 170 (EGQYYWADLE…RIELDWDPDF (73 aa)) form the PRC barrel domain.

The protein belongs to the RimM family. As to quaternary structure, binds ribosomal protein uS19.

The protein localises to the cytoplasm. An accessory protein needed during the final step in the assembly of 30S ribosomal subunit, possibly for assembly of the head region. Essential for efficient processing of 16S rRNA. May be needed both before and after RbfA during the maturation of 16S rRNA. It has affinity for free ribosomal 30S subunits but not for 70S ribosomes. This Alkalilimnicola ehrlichii (strain ATCC BAA-1101 / DSM 17681 / MLHE-1) protein is Ribosome maturation factor RimM.